The chain runs to 248 residues: Probable transcriptional regulatory protein PHZ_c3068 (248 aa).

It belongs to the TACO1 family.

Its subcellular location is the cytoplasm. The protein is Probable transcriptional regulatory protein PHZ_c3068 of Phenylobacterium zucineum (strain HLK1).